Reading from the N-terminus, the 1117-residue chain is Telomerase reverse transcriptase (1117 aa).

Residues 1 to 191 (MQKINNINNN…VKQKKWYKNN (191 aa)) form a TEN region. The tract at residues 217 to 519 (NQYIYPEIQR…ENLEKVEEKL (303 aa)) is RBD. In terms of domain architecture, Reverse transcriptase spans 517–881 (EKLIPEDSFQ…NECQWIGKSI (365 aa)). An RT region spans residues 520-887 (IPEDSFQKYP…GKSIDMNTLE (368 aa)). Position 618 (D618) interacts with Mg(2+). The interval 638-742 (SDLIQDTYFI…NQDKPRCITK (105 aa)) is TRAP. Mg(2+) is bound by residues D815 and D816. Positions 888 to 1117 (IKSIQKQTQQ…SAKSNQQNTN (230 aa)) are CTE.

It belongs to the reverse transcriptase family. Telomerase subfamily. Component of the telomerase holoenzyme complex, composed of the catalytic core (the catalytic subunit TERT, the telomerase RNA template component TER and TAP65/p65), which is associated with two heterotrimeric subcomplexes: (i) the replication protein A (RPA)-related subcomplex, composed of TEB1, RPA2/TEB2 and RPA3/TEB3 and (ii) the CST-like subcomplex, composed of TAP75/p75, TAP45/p45 and TAP19/p19. TEB1 and the CST-like subcomplex are tethered to the catalytic core by TAP50/p50.

The protein resides in the nucleus. Its subcellular location is the chromosome. It is found in the telomere. The enzyme catalyses DNA(n) + a 2'-deoxyribonucleoside 5'-triphosphate = DNA(n+1) + diphosphate. In terms of biological role, catalytic component of telomerase, an essential ribonucleoprotein enzyme that copies new telomeric repeats onto chromosome ends by repetitively synthesizing the short telomere-repeat sequence 5'-TTGGGG-3' using an RNA template component TER. TERT is a reverse transcriptase that adds simple sequence repeats to chromosome ends by copying a template sequence within the RNA component of the enzyme. The protein is Telomerase reverse transcriptase of Tetrahymena thermophila (strain SB210).